The chain runs to 614 residues: Leucine-rich repeat protein soc-2 homolog (614 aa).

Disordered stretches follow at residues Met1–Pro29 and Asn44–Thr79. 20 LRR repeats span residues Gly134–Cys155, His157–Leu178, Asn180–Cys201, Gln203–Leu224, Ser226–Leu247, Asn249–Leu270, Asn272–Cys293, Asn295–Leu316, Ser318–Lys340, Ser341–Ser362, Ala365–Gln386, Asn389–Arg410, Gly413–Trp434, Asn436–Leu457, Asn459–Leu480, Lys482–Leu503, Glu505–Leu526, Asn528–Leu549, Ser551–Cys573, and Asn575–Gly596.

It belongs to the SHOC2 family.

Its function is as follows. Acts as a Ras effector and participates in MAPK pathway activation. Probably acts as a regulatory subunit of protein phosphatase that specifically dephosphorylates Raf kinase and stimulate Raf activity at specialized signaling complexes upon Ras activation. The chain is Leucine-rich repeat protein soc-2 homolog (Sur-8) from Drosophila virilis (Fruit fly).